A 100-amino-acid chain; its full sequence is Large ribosomal subunit protein uL23 (100 aa).

Belongs to the universal ribosomal protein uL23 family. In terms of assembly, part of the 50S ribosomal subunit. Contacts protein L29, and trigger factor when it is bound to the ribosome.

In terms of biological role, one of the early assembly proteins it binds 23S rRNA. One of the proteins that surrounds the polypeptide exit tunnel on the outside of the ribosome. Forms the main docking site for trigger factor binding to the ribosome. This chain is Large ribosomal subunit protein uL23, found in Mycobacteroides abscessus (strain ATCC 19977 / DSM 44196 / CCUG 20993 / CIP 104536 / JCM 13569 / NCTC 13031 / TMC 1543 / L948) (Mycobacterium abscessus).